The following is a 112-amino-acid chain: Nucleoid-associated protein FTM_1023 (112 aa).

Belongs to the YbaB/EbfC family. As to quaternary structure, homodimer.

The protein resides in the cytoplasm. It is found in the nucleoid. Its function is as follows. Binds to DNA and alters its conformation. May be involved in regulation of gene expression, nucleoid organization and DNA protection. This is Nucleoid-associated protein FTM_1023 from Francisella tularensis subsp. mediasiatica (strain FSC147).